Reading from the N-terminus, the 467-residue chain is Hydroxymethylglutaryl-CoA synthase erg13A (467 aa).

Position 35 (Ala-35) interacts with (3S)-3-hydroxy-3-methylglutaryl-CoA. Glu-86 acts as the Proton donor/acceptor in catalysis. (3S)-3-hydroxy-3-methylglutaryl-CoA contacts are provided by Cys-118, Thr-160, Ser-209, His-259, Lys-268, Asn-334, and Ser-368. Residue Cys-118 is the Acyl-thioester intermediate of the active site. His-259 functions as the Proton donor/acceptor in the catalytic mechanism.

Belongs to the thiolase-like superfamily. HMG-CoA synthase family.

It carries out the reaction acetoacetyl-CoA + acetyl-CoA + H2O = (3S)-3-hydroxy-3-methylglutaryl-CoA + CoA + H(+). It participates in metabolic intermediate biosynthesis; (R)-mevalonate biosynthesis; (R)-mevalonate from acetyl-CoA: step 2/3. Its function is as follows. Hydroxymethylglutaryl-CoA synthase; part of the first module of ergosterol biosynthesis pathway that includes the early steps of the pathway, conserved across all eukaryotes, and which results in the formation of mevalonate from acetyl-coenzyme A (acetyl-CoA). Erg13A and erg13B condense acetyl-CoA with acetoacetyl-CoA to form hydroxymethylglutaryl-CoA (HMG-CoA). The first module starts with the action of the cytosolic acetyl-CoA acetyltransferase erg10B that catalyzes the formation of acetoacetyl-CoA. The hydroxymethylglutaryl-CoA synthases erg13A and erg13B then condense acetyl-CoA with acetoacetyl-CoA to form HMG-CoA. The rate-limiting step of the early module is the reduction to mevalonate by the 3-hydroxy-3-methylglutaryl-coenzyme A (HMG-CoA) reductases hmg1 and hmg2. Mevalonate is also a precursor for the extracellular siderophore triacetylfusarinine C (TAFC). The sequence is that of Hydroxymethylglutaryl-CoA synthase erg13A from Aspergillus fumigatus (strain ATCC MYA-4609 / CBS 101355 / FGSC A1100 / Af293) (Neosartorya fumigata).